Reading from the N-terminus, the 320-residue chain is o-succinylbenzoate synthase (320 aa).

Lysine 133 acts as the Proton donor in catalysis. Aspartate 161, glutamate 190, and aspartate 213 together coordinate Mg(2+). Catalysis depends on lysine 235, which acts as the Proton acceptor.

Belongs to the mandelate racemase/muconate lactonizing enzyme family. MenC type 1 subfamily. A divalent metal cation is required as a cofactor.

It carries out the reaction (1R,6R)-6-hydroxy-2-succinyl-cyclohexa-2,4-diene-1-carboxylate = 2-succinylbenzoate + H2O. Its pathway is quinol/quinone metabolism; 1,4-dihydroxy-2-naphthoate biosynthesis; 1,4-dihydroxy-2-naphthoate from chorismate: step 4/7. The protein operates within quinol/quinone metabolism; menaquinone biosynthesis. Converts 2-succinyl-6-hydroxy-2,4-cyclohexadiene-1-carboxylate (SHCHC) to 2-succinylbenzoate (OSB). The sequence is that of o-succinylbenzoate synthase from Salmonella paratyphi C (strain RKS4594).